The sequence spans 73 residues: MEEGETVRKILLAILFFALVVSLVGLYVSANVMIDVWAGQKYSTVYKVLMNAAMLLIVIYLIQRLIIQPRNSD.

Helical transmembrane passes span 10–30 (ILLA…YVSA) and 42–62 (YSTV…IYLI).

The protein localises to the cell membrane. This is an uncharacterized protein from Archaeoglobus fulgidus (strain ATCC 49558 / DSM 4304 / JCM 9628 / NBRC 100126 / VC-16).